The sequence spans 125 residues: Glycine cleavage system H protein (125 aa).

The 83-residue stretch at 22–104 (SYIIGITDFA…YDTGWILKLT (83 aa)) folds into the Lipoyl-binding domain. Position 63 is an N6-lipoyllysine (Lys-63).

The protein belongs to the GcvH family. The glycine cleavage system is composed of four proteins: P, T, L and H. It depends on (R)-lipoate as a cofactor.

In terms of biological role, the glycine cleavage system catalyzes the degradation of glycine. The H protein shuttles the methylamine group of glycine from the P protein to the T protein. Its function is as follows. Is also involved in protein lipoylation via its role as an octanoyl/lipoyl carrier protein intermediate. The sequence is that of Glycine cleavage system H protein from Listeria welshimeri serovar 6b (strain ATCC 35897 / DSM 20650 / CCUG 15529 / CIP 8149 / NCTC 11857 / SLCC 5334 / V8).